The primary structure comprises 141 residues: Transcription antitermination protein NusB (141 aa).

Belongs to the NusB family.

Its function is as follows. Involved in transcription antitermination. Required for transcription of ribosomal RNA (rRNA) genes. Binds specifically to the boxA antiterminator sequence of the ribosomal RNA (rrn) operons. This chain is Transcription antitermination protein NusB, found in Neisseria meningitidis serogroup B (strain ATCC BAA-335 / MC58).